Here is a 536-residue protein sequence, read N- to C-terminus: Inactive phospholipase D5 (536 aa).

A helical transmembrane segment spans residues 69–89 (IVIFALVCCFAILVALIFSAV). N-linked (GlcNAc...) asparagine glycosylation occurs at asparagine 121. One can recognise a PLD phosphodiesterase 1 domain in the interval 215–242 (NKGRLQSSFWIVDKQHVYIGSAGLDWQS). Asparagine 302 carries N-linked (GlcNAc...) asparagine glycosylation. The PLD phosphodiesterase 2 domain occupies 434–460 (FPRLNRNKYMVTDGAAYIGNFDWVGND).

The protein belongs to the phospholipase D family.

Its subcellular location is the membrane. The protein is Inactive phospholipase D5 (PLD5) of Homo sapiens (Human).